A 65-amino-acid chain; its full sequence is Large ribosomal subunit protein bL32 (65 aa).

Basic residues predominate over residues 1–18; the sequence is MAVPKRRHSKSRTRKRRS. The tract at residues 1 to 20 is disordered; that stretch reads MAVPKRRHSKSRTRKRRSTY.

Belongs to the bacterial ribosomal protein bL32 family.

In Salinibacter ruber (strain DSM 13855 / M31), this protein is Large ribosomal subunit protein bL32.